We begin with the raw amino-acid sequence, 113 residues long: Hydrogenase maturation factor HypA (113 aa).

Ni(2+) is bound at residue histidine 2. Positions 73, 76, 89, and 92 each coordinate Zn(2+).

This sequence belongs to the HypA/HybF family.

Functionally, involved in the maturation of [NiFe] hydrogenases. Required for nickel insertion into the metal center of the hydrogenase. This chain is Hydrogenase maturation factor HypA, found in Rhodopseudomonas palustris (strain TIE-1).